The following is a 239-amino-acid chain: Small ribosomal subunit protein uS3c (239 aa).

The 97-residue stretch at 43-139 (IKNYIQKNRK…RFNISIEKVK (97 aa)) folds into the KH type-2 domain. Residues 50–74 (NRKKGSNRKIESDSSSEVITHNRKM) are disordered.

The protein belongs to the universal ribosomal protein uS3 family. As to quaternary structure, part of the 30S ribosomal subunit.

The protein localises to the plastid. It is found in the chloroplast. The chain is Small ribosomal subunit protein uS3c (rps3) from Triticum aestivum (Wheat).